The following is an 88-amino-acid chain: Putative membrane protein insertion efficiency factor (88 aa).

The segment at 66–88 (DFVPPKKEKNADSEHSCKAHHHH) is disordered. Residues 69–82 (PPKKEKNADSEHSC) show a composition bias toward basic and acidic residues.

Belongs to the UPF0161 family.

The protein resides in the cell membrane. Could be involved in insertion of integral membrane proteins into the membrane. The chain is Putative membrane protein insertion efficiency factor from Listeria monocytogenes serotype 4b (strain CLIP80459).